The chain runs to 134 residues: Fluoride-specific ion channel FluC 2 (134 aa).

A run of 4 helical transmembrane segments spans residues 10–30 (LSAE…GALL), 43–63 (LLVN…PAAP), 67–87 (LLVG…MVDA), and 100–120 (FGLI…GFWL). Positions 75 and 78 each coordinate Na(+).

This sequence belongs to the fluoride channel Fluc/FEX (TC 1.A.43) family.

It localises to the cell inner membrane. The enzyme catalyses fluoride(in) = fluoride(out). With respect to regulation, na(+) is not transported, but it plays an essential structural role and its presence is essential for fluoride channel function. Its function is as follows. Fluoride-specific ion channel. Important for reducing fluoride concentration in the cell, thus reducing its toxicity. This chain is Fluoride-specific ion channel FluC 2, found in Synechococcus sp. (strain CC9902).